The following is a 521-amino-acid chain: MTNIHNDKILILDFGAQYTQLIARRIRELGVYCEIWAWDHNPAEIAGFGAKGIILSGGPESTTLPGAPAAPQEVFDSGLPIFGICYGMQTLAAQLGGATEAADQREFGHAEVNVINPDALFKGLSDHGGEPKLNVWMSHGDHVSVAPPGFTITATTDRIPVAAMANEEKRWYGVQFHPEVTHTLQGQALLRRFVVDVCGCQTLWTAANIIDDQIARVREQVGDDEVILGLSGGVDSSVVAALLHKAIGEKLTCVFVDTGLLRWQEGDQVMAMFAEHMGVKVVRVNAADRYFAALEGVSDPEAKRKIIGNLFVEIFDEESNKLKNAKWLAQGTIYPDVIESAGSKTGKAHVIKSHHNVGGLPEHMKLGLVEPLRELFKDEVRRLGVELGLPRTMVYRHPFPGPGLGVRILGEVKREYAELLAKADAIFIDELRKADLYDKTSQAFAVFLPVKSVGVVGDARAYEWVIALRAVETIDFMTAHWAHLPYEFLGTVSNRIINELRGVSRVVYDISGKPPATIEWE.

One can recognise a Glutamine amidotransferase type-1 domain in the interval lysine 8–leucine 203. Cysteine 85 serves as the catalytic Nucleophile. Residues histidine 177 and glutamate 179 contribute to the active site. Residues tryptophan 204 to arginine 396 enclose the GMPS ATP-PPase domain. Serine 231–serine 237 contributes to the ATP binding site.

In terms of assembly, homodimer.

It catalyses the reaction XMP + L-glutamine + ATP + H2O = GMP + L-glutamate + AMP + diphosphate + 2 H(+). It participates in purine metabolism; GMP biosynthesis; GMP from XMP (L-Gln route): step 1/1. Catalyzes the synthesis of GMP from XMP. The polypeptide is GMP synthase [glutamine-hydrolyzing] (Stenotrophomonas maltophilia (strain K279a)).